A 623-amino-acid chain; its full sequence is Probable lysophospholipase 5 (623 aa).

A signal peptide spans 1 to 19 (MKLSSFGLFLALQLLPALG). Residues 67-607 (ACPSGSLLRP…NQYCWNGTIA (541 aa)) form the PLA2c domain. N-linked (GlcNAc...) asparagine glycosylation is found at N118, N153, N187, N232, N256, N264, N293, N331, N360, N367, N400, N403, N474, N508, N513, N537, N564, N586, and N603.

This sequence belongs to the lysophospholipase family.

The protein resides in the secreted. It carries out the reaction a 1-acyl-sn-glycero-3-phosphocholine + H2O = sn-glycerol 3-phosphocholine + a fatty acid + H(+). Catalyzes the release of fatty acids from lysophospholipids. This Schizosaccharomyces pombe (strain 972 / ATCC 24843) (Fission yeast) protein is Probable lysophospholipase 5 (plb5).